The chain runs to 142 residues: Large ribosomal subunit protein uL13 (142 aa).

It belongs to the universal ribosomal protein uL13 family. In terms of assembly, part of the 50S ribosomal subunit.

Functionally, this protein is one of the early assembly proteins of the 50S ribosomal subunit, although it is not seen to bind rRNA by itself. It is important during the early stages of 50S assembly. This Alkaliphilus metalliredigens (strain QYMF) protein is Large ribosomal subunit protein uL13.